Reading from the N-terminus, the 257-residue chain is GTP cyclohydrolase FolE2 (257 aa).

The protein belongs to the GTP cyclohydrolase IV family.

It catalyses the reaction GTP + H2O = 7,8-dihydroneopterin 3'-triphosphate + formate + H(+). The protein operates within cofactor biosynthesis; 7,8-dihydroneopterin triphosphate biosynthesis; 7,8-dihydroneopterin triphosphate from GTP: step 1/1. Converts GTP to 7,8-dihydroneopterin triphosphate. In Dictyoglomus thermophilum (strain ATCC 35947 / DSM 3960 / H-6-12), this protein is GTP cyclohydrolase FolE2.